Here is a 302-residue protein sequence, read N- to C-terminus: Nucleotide-binding protein Rsph17025_2562 (302 aa).

15-22 (GPSGAGRT) contacts ATP. 62–65 (DVRN) contributes to the GTP binding site.

This sequence belongs to the RapZ-like family.

Displays ATPase and GTPase activities. The sequence is that of Nucleotide-binding protein Rsph17025_2562 from Cereibacter sphaeroides (strain ATCC 17025 / ATH 2.4.3) (Rhodobacter sphaeroides).